Consider the following 185-residue polypeptide: Ribosome maturation factor RimM (185 aa).

In terms of domain architecture, PRC barrel spans 108–183; sequence PGEFHVTDLL…RLEIKTIPGL (76 aa).

It belongs to the RimM family. As to quaternary structure, binds ribosomal protein uS19.

Its subcellular location is the cytoplasm. An accessory protein needed during the final step in the assembly of 30S ribosomal subunit, possibly for assembly of the head region. Essential for efficient processing of 16S rRNA. May be needed both before and after RbfA during the maturation of 16S rRNA. It has affinity for free ribosomal 30S subunits but not for 70S ribosomes. This chain is Ribosome maturation factor RimM, found in Synechocystis sp. (strain ATCC 27184 / PCC 6803 / Kazusa).